Here is a 311-residue protein sequence, read N- to C-terminus: Methionyl-tRNA formyltransferase (311 aa).

110 to 113 (SLLP) provides a ligand contact to (6S)-5,6,7,8-tetrahydrofolate.

This sequence belongs to the Fmt family.

It catalyses the reaction L-methionyl-tRNA(fMet) + (6R)-10-formyltetrahydrofolate = N-formyl-L-methionyl-tRNA(fMet) + (6S)-5,6,7,8-tetrahydrofolate + H(+). In terms of biological role, attaches a formyl group to the free amino group of methionyl-tRNA(fMet). The formyl group appears to play a dual role in the initiator identity of N-formylmethionyl-tRNA by promoting its recognition by IF2 and preventing the misappropriation of this tRNA by the elongation apparatus. The sequence is that of Methionyl-tRNA formyltransferase from Streptococcus pneumoniae (strain JJA).